The primary structure comprises 517 residues: Ribose import ATP-binding protein RbsA 2 (517 aa).

2 consecutive ABC transporter domains span residues 11–251 (LEMR…VGRD) and 263–507 (YDPG…ALAT). 43 to 50 (GENGAGKS) is a binding site for ATP.

The protein belongs to the ABC transporter superfamily. Ribose importer (TC 3.A.1.2.1) family. As to quaternary structure, the complex is composed of an ATP-binding protein (RbsA), two transmembrane proteins (RbsC) and a solute-binding protein (RbsB).

The protein resides in the cell inner membrane. It carries out the reaction D-ribose(out) + ATP + H2O = D-ribose(in) + ADP + phosphate + H(+). In terms of biological role, part of the ABC transporter complex RbsABC involved in ribose import. Responsible for energy coupling to the transport system. In Burkholderia pseudomallei (strain 1710b), this protein is Ribose import ATP-binding protein RbsA 2.